The chain runs to 490 residues: Probable cytosol aminopeptidase (490 aa).

Positions 257 and 262 each coordinate Mn(2+). Lys269 is a catalytic residue. Residues Asp281, Asp341, and Glu343 each contribute to the Mn(2+) site. Residue Arg345 is part of the active site.

This sequence belongs to the peptidase M17 family. It depends on Mn(2+) as a cofactor.

Its subcellular location is the cytoplasm. The enzyme catalyses Release of an N-terminal amino acid, Xaa-|-Yaa-, in which Xaa is preferably Leu, but may be other amino acids including Pro although not Arg or Lys, and Yaa may be Pro. Amino acid amides and methyl esters are also readily hydrolyzed, but rates on arylamides are exceedingly low.. It carries out the reaction Release of an N-terminal amino acid, preferentially leucine, but not glutamic or aspartic acids.. In terms of biological role, presumably involved in the processing and regular turnover of intracellular proteins. Catalyzes the removal of unsubstituted N-terminal amino acids from various peptides. The protein is Probable cytosol aminopeptidase of Prochlorococcus marinus (strain MIT 9215).